Reading from the N-terminus, the 333-residue chain is Photosystem II assembly lipoprotein Ycf48 (333 aa).

The first 23 residues, 1–23 (MTRFVSSAINLLLVLVLGVSLSG), serve as a signal peptide directing secretion. Residue cysteine 24 is the site of N-palmitoyl cysteine attachment. Cysteine 24 is lipidated: S-diacylglycerol cysteine.

It belongs to the Ycf48 family. Part of early PSII assembly complexes which includes D1 (psbA) and PsbI; not found in mature PSII. Binds to the lumenal side of PSII complexes. Interacts with YidC.

The protein localises to the cellular thylakoid membrane. Its function is as follows. A factor required for optimal assembly of photosystem II (PSII), acting in the early stages of PSII assembly. Also plays a role in replacement of photodamaged D1 (psbA). Assists YidC in synthesis of chlorophyll-binding proteins. The polypeptide is Photosystem II assembly lipoprotein Ycf48 (Parasynechococcus marenigrum (strain WH8102)).